A 64-amino-acid chain; its full sequence is MRIFSLIVAGLVLLIQLYPAWGTLYRRFLCKKMNGQCEAECFTFEQKIGTCQANFLCCRKRKEH.

An N-terminal signal peptide occupies residues 1–22 (MRIFSLIVAGLVLLIQLYPAWG). Intrachain disulfides connect Cys30–Cys57, Cys37–Cys51, and Cys41–Cys58.

This sequence belongs to the beta-defensin family. As to expression, expressed in testis and to a lesser extent in epididymis (caput, corpus and cauda). Also weakly expressed in kidneys.

Its subcellular location is the secreted. In terms of biological role, has antibacterial activity. This chain is Beta-defensin 13 (Defb13), found in Mus musculus (Mouse).